Reading from the N-terminus, the 318-residue chain is Ubiquitin-like domain-containing CTD phosphatase 1 (318 aa).

Alanine 2 carries the post-translational modification N-acetylalanine. The Ubiquitin-like domain maps to 3–81; that stretch reads LPIIVKWGGQ…IMMMGTREES (79 aa). Lysine 117 is subject to N6-acetyllysine. An FCP1 homology domain is found at 133–294; that stretch reads PREGKKLLVL…LKLTQYLKEI (162 aa). Mg(2+) contacts are provided by aspartate 143, aspartate 145, and aspartate 253.

It depends on Mg(2+) as a cofactor.

It localises to the nucleus. The enzyme catalyses O-phospho-L-seryl-[protein] + H2O = L-seryl-[protein] + phosphate. It carries out the reaction O-phospho-L-threonyl-[protein] + H2O = L-threonyl-[protein] + phosphate. Dephosphorylates 26S nuclear proteasomes, thereby decreasing their proteolytic activity. Recruited to the 19S regulatory particle of the 26S proteasome through its interaction with 19S component PSMD2/RPN1. Once recruited, dephosphorylates 19S component PSMC2/RPT1 which impairs PSMC2 ATPase activity and disrupts 26S proteasome assembly. Has also been reported to stimulate the proteolytic activity of the 26S proteasome. This is Ubiquitin-like domain-containing CTD phosphatase 1 (UBLCP1) from Bos taurus (Bovine).